Consider the following 98-residue polypeptide: Integration host factor subunit alpha (98 aa).

Residues Asn51 to Ile71 are disordered. Positions Asp53–Glu69 are enriched in basic and acidic residues.

It belongs to the bacterial histone-like protein family. As to quaternary structure, heterodimer of an alpha and a beta chain.

Functionally, this protein is one of the two subunits of integration host factor, a specific DNA-binding protein that functions in genetic recombination as well as in transcriptional and translational control. The polypeptide is Integration host factor subunit alpha (Vibrio campbellii (strain ATCC BAA-1116)).